A 338-amino-acid chain; its full sequence is MKFVDSASVFVQAGDGGRGCVSFRREKFVPKGGPDGGDGGRGGHVWLETNSHLTTLLDFKYKNKYIAERGVHGQGARKTGKDGVEVVIQVPCGTIVRNAATGEVIADLTEDAQKILIARGGRGGRGNQHFATSTHQAPRHAEPGQKGEEFTLDLELKLMADVGLVGFPNAGKSTLISVVSAARPKIADYPFTTLVPNLGIVRYDDYKSFVMADIPGIIEGAAEGRGLGLQFLRHIERTKVLAILIAVDSPDIEAEYQTILGELEKFSATLLQKPRIVVITKMDVTDEPLALQLAGEQTPIFAISAVAGQGLKELKDALWRIIVAERAVPTNQVPQGGE.

An Obg domain is found at 1-159 (MKFVDSASVF…FTLDLELKLM (159 aa)). Positions 123-145 (GGRGNQHFATSTHQAPRHAEPGQ) are disordered. In terms of domain architecture, OBG-type G spans 160-323 (ADVGLVGFPN…LKDALWRIIV (164 aa)). Residues 166 to 173 (GFPNAGKS), 191 to 195 (FTTLV), 213 to 216 (DIPG), 280 to 283 (TKMD), and 304 to 306 (SAV) each bind GTP. 2 residues coordinate Mg(2+): serine 173 and threonine 193.

The protein belongs to the TRAFAC class OBG-HflX-like GTPase superfamily. OBG GTPase family. Monomer. Mg(2+) is required as a cofactor.

The protein resides in the cytoplasm. In terms of biological role, an essential GTPase which binds GTP, GDP and possibly (p)ppGpp with moderate affinity, with high nucleotide exchange rates and a fairly low GTP hydrolysis rate. Plays a role in control of the cell cycle, stress response, ribosome biogenesis and in those bacteria that undergo differentiation, in morphogenesis control. The sequence is that of GTPase Obg from Chlorobium chlorochromatii (strain CaD3).